Here is a 223-residue protein sequence, read N- to C-terminus: Protein FAM3D (223 aa).

An N-terminal signal peptide occupies residues 1–25 (MRVAGLIRVVVFIFTIVTMWVFLRS). 2 disulfides stabilise this stretch: Cys-54–Cys-82 and Cys-60–Cys-217. Residues 62–221 (NNFFAFKISS…LELEGCVPRK (160 aa)) enclose the GG-type lectin domain. A glycan (N-linked (GlcNAc...) asparagine) is linked at Asn-106.

It belongs to the FAM3 family.

It is found in the secreted. This chain is Protein FAM3D, found in Mus musculus (Mouse).